The primary structure comprises 436 residues: Tol-Pal system protein TolB (436 aa).

An N-terminal signal peptide occupies residues 1 to 28; it reads MMKCSFFRAILVAVGLMAAAVVATPANA.

It belongs to the TolB family. The Tol-Pal system is composed of five core proteins: the inner membrane proteins TolA, TolQ and TolR, the periplasmic protein TolB and the outer membrane protein Pal. They form a network linking the inner and outer membranes and the peptidoglycan layer.

The protein resides in the periplasm. Part of the Tol-Pal system, which plays a role in outer membrane invagination during cell division and is important for maintaining outer membrane integrity. This chain is Tol-Pal system protein TolB, found in Rhizobium etli (strain CIAT 652).